Consider the following 433-residue polypeptide: Serine--tRNA ligase (433 aa).

235–237 (TSE) serves as a coordination point for L-serine. 266 to 268 (RSE) serves as a coordination point for ATP. Residue Glu289 participates in L-serine binding. ATP is bound at residue 353 to 356 (EISS). Ser388 contributes to the L-serine binding site.

It belongs to the class-II aminoacyl-tRNA synthetase family. Type-1 seryl-tRNA synthetase subfamily. Homodimer. The tRNA molecule binds across the dimer.

It is found in the cytoplasm. The catalysed reaction is tRNA(Ser) + L-serine + ATP = L-seryl-tRNA(Ser) + AMP + diphosphate + H(+). It carries out the reaction tRNA(Sec) + L-serine + ATP = L-seryl-tRNA(Sec) + AMP + diphosphate + H(+). It participates in aminoacyl-tRNA biosynthesis; selenocysteinyl-tRNA(Sec) biosynthesis; L-seryl-tRNA(Sec) from L-serine and tRNA(Sec): step 1/1. Catalyzes the attachment of serine to tRNA(Ser). Is also able to aminoacylate tRNA(Sec) with serine, to form the misacylated tRNA L-seryl-tRNA(Sec), which will be further converted into selenocysteinyl-tRNA(Sec). The chain is Serine--tRNA ligase from Burkholderia orbicola (strain MC0-3).